Here is a 178-residue protein sequence, read N- to C-terminus: Cytochrome b6-f complex iron-sulfur subunit 3 (178 aa).

The chain crosses the membrane as a helical span at residues 20–42 (FITGATVAVTAGAALYPAGKFLI). The 97-residue stretch at 65–161 (PASQILAEPP…VAVIDNSILI (97 aa)) folds into the Rieske domain. [2Fe-2S] cluster contacts are provided by Cys-107, His-109, Cys-125, and His-128. The cysteines at positions 112 and 127 are disulfide-linked.

It belongs to the Rieske iron-sulfur protein family. In terms of assembly, the 4 large subunits of the cytochrome b6-f complex are cytochrome b6, subunit IV (17 kDa polypeptide, PetD), cytochrome f and the Rieske protein, while the 4 small subunits are PetG, PetL, PetM and PetN. The complex functions as a dimer. Requires [2Fe-2S] cluster as cofactor.

It localises to the cellular thylakoid membrane. It catalyses the reaction 2 oxidized [plastocyanin] + a plastoquinol + 2 H(+)(in) = 2 reduced [plastocyanin] + a plastoquinone + 4 H(+)(out). Its function is as follows. Component of the cytochrome b6-f complex, which mediates electron transfer between photosystem II (PSII) and photosystem I (PSI), cyclic electron flow around PSI, and state transitions. The sequence is that of Cytochrome b6-f complex iron-sulfur subunit 3 from Nostoc sp. (strain PCC 7120 / SAG 25.82 / UTEX 2576).